The chain runs to 36 residues: Peruvianin-1 (36 aa).

The protein belongs to the germin family. Homohexamer, possibly consisting of a trimer of dimers. Glycosylated.

With respect to regulation, inhibited by iodoacetamide and trans-epoxysuccinyl-L-leucylamido(4-guanidino)butane (E-64) but not by phenylmethylsulfonyl fluoride (PMSF), pepstatin-A, ethylenediamine tetra acetic acid (EDTA) or ethylene glycol tetraacetic acid (EGTA). In terms of biological role, cysteine protease able to degrade azocasein and benzoyl-arginine-beta-naphtylamide (BANA) in vitro. In Thevetia peruviana (Yellow oleander), this protein is Peruvianin-1.